A 401-amino-acid polypeptide reads, in one-letter code: Enolase (401 aa).

Residue Gln-154 coordinates (2R)-2-phosphoglycerate. The active-site Proton donor is Glu-196. Mg(2+) contacts are provided by Asp-232, Glu-275, and Asp-302. Positions 327, 356, 357, and 378 each coordinate (2R)-2-phosphoglycerate. Lys-327 acts as the Proton acceptor in catalysis.

The protein belongs to the enolase family. Mg(2+) serves as cofactor.

It localises to the cytoplasm. It is found in the secreted. The protein resides in the cell surface. It catalyses the reaction (2R)-2-phosphoglycerate = phosphoenolpyruvate + H2O. The protein operates within carbohydrate degradation; glycolysis; pyruvate from D-glyceraldehyde 3-phosphate: step 4/5. Functionally, catalyzes the reversible conversion of 2-phosphoglycerate (2-PG) into phosphoenolpyruvate (PEP). It is essential for the degradation of carbohydrates via glycolysis. This Haloarcula marismortui (strain ATCC 43049 / DSM 3752 / JCM 8966 / VKM B-1809) (Halobacterium marismortui) protein is Enolase.